We begin with the raw amino-acid sequence, 320 residues long: MRLGPRPAVLGLLLLLLLYAAVAGASKAEELHYPQGEHRADYDRETLLGVQEDVDEYVKLGHEEQQRRLQSIIKKIDSDSDGFLTENELSQWIQMSFKHYAMQEAKQQFVEYDKNSDGTVTWDEYNVQMYDRVIDFDENTALDDTEEESFRQLHLKDKKRFEKANQDSGPGLNLEEFIAFEHPEEVDYMTEFVIQEALEEHDKNGDGFVSLEEFLGDYRRDPTANEDPEWILVEKDRFVNDYDKDSDGRLDPQELLSWVVPNNQGIAQEEALHLIDEMDLNSDKKLSEEEILENQDLFLTSEATDYGRQLHDDYFYHDEL.

The first 25 residues, 1 to 25, serve as a signal peptide directing secretion; that stretch reads MRLGPRPAVLGLLLLLLLYAAVAGA. 2 consecutive EF-hand domains span residues 64 to 99 and 100 to 135; these read EQQRRLQSIIKKIDSDSDGFLTENELSQWIQMSFKH and YAMQEAKQQFVEYDKNSDGTVTWDEYNVQMYDRVID. The Ca(2+) site is built by aspartate 77, aspartate 79, aspartate 81, glutamate 88, aspartate 113, asparagine 115, aspartate 117, threonine 119, and glutamate 124. Threonine 140 is modified (phosphothreonine). EF-hand domains are found at residues 150–185, 189–224, 230–265, and 266–301; these read FRQLHLKDKKRFEKANQDSGPGLNLEEFIAFEHPEE, MTEFVIQEALEEHDKNGDGFVSLEEFLGDYRRDPTA, WILVEKDRFVNDYDKDSDGRLDPQELLSWVVPNNQG, and IAQEEALHLIDEMDLNSDKKLSEEEILENQDLFLTS. Residues aspartate 167, glutamate 176, aspartate 202, asparagine 204, aspartate 206, glutamate 213, aspartate 243, aspartate 245, aspartate 247, arginine 249, glutamate 254, aspartate 279, asparagine 281, aspartate 283, lysine 285, and glutamate 290 each contribute to the Ca(2+) site. The Prevents secretion from ER signature appears at 317-320; sequence HDEL.

It belongs to the CREC family. Binds the snake venom phospholipase complex taipoxin. As to expression, ubiquitous.

It localises to the endoplasmic reticulum lumen. Its function is as follows. Not known. Binds calcium. The chain is Reticulocalbin-2 (Rcn2) from Rattus norvegicus (Rat).